The following is a 203-amino-acid chain: Guanylate kinase (203 aa).

Positions 3–181 (GTLYVVSAPS…TLADLQAIFT (179 aa)) constitute a Guanylate kinase-like domain. 10–17 (APSGAGKT) contributes to the ATP binding site.

It belongs to the guanylate kinase family.

It localises to the cytoplasm. It catalyses the reaction GMP + ATP = GDP + ADP. Essential for recycling GMP and indirectly, cGMP. The polypeptide is Guanylate kinase (Alkalilimnicola ehrlichii (strain ATCC BAA-1101 / DSM 17681 / MLHE-1)).